We begin with the raw amino-acid sequence, 344 residues long: Uroporphyrinogen decarboxylase (344 aa).

Substrate-binding positions include 29–33 (RQAGR), Asp79, Tyr153, Ser208, and His324.

Belongs to the uroporphyrinogen decarboxylase family. Homodimer.

The protein resides in the cytoplasm. It catalyses the reaction uroporphyrinogen III + 4 H(+) = coproporphyrinogen III + 4 CO2. It participates in porphyrin-containing compound metabolism; protoporphyrin-IX biosynthesis; coproporphyrinogen-III from 5-aminolevulinate: step 4/4. In terms of biological role, catalyzes the decarboxylation of four acetate groups of uroporphyrinogen-III to yield coproporphyrinogen-III. The sequence is that of Uroporphyrinogen decarboxylase from Rhizorhabdus wittichii (strain DSM 6014 / CCUG 31198 / JCM 15750 / NBRC 105917 / EY 4224 / RW1) (Sphingomonas wittichii).